We begin with the raw amino-acid sequence, 363 residues long: Phosphoserine aminotransferase (363 aa).

Position 42 (arginine 42) interacts with L-glutamate. Residues glycine 76–arginine 77, tryptophan 102, threonine 156, aspartate 175, and glutamine 198 each bind pyridoxal 5'-phosphate. Lysine 199 is subject to N6-(pyridoxal phosphate)lysine. Asparagine 240 to threonine 241 contacts pyridoxal 5'-phosphate.

The protein belongs to the class-V pyridoxal-phosphate-dependent aminotransferase family. SerC subfamily. As to quaternary structure, homodimer. Requires pyridoxal 5'-phosphate as cofactor.

It localises to the cytoplasm. It carries out the reaction O-phospho-L-serine + 2-oxoglutarate = 3-phosphooxypyruvate + L-glutamate. The catalysed reaction is 4-(phosphooxy)-L-threonine + 2-oxoglutarate = (R)-3-hydroxy-2-oxo-4-phosphooxybutanoate + L-glutamate. Its pathway is amino-acid biosynthesis; L-serine biosynthesis; L-serine from 3-phospho-D-glycerate: step 2/3. The protein operates within cofactor biosynthesis; pyridoxine 5'-phosphate biosynthesis; pyridoxine 5'-phosphate from D-erythrose 4-phosphate: step 3/5. In terms of biological role, catalyzes the reversible conversion of 3-phosphohydroxypyruvate to phosphoserine and of 3-hydroxy-2-oxo-4-phosphonooxybutanoate to phosphohydroxythreonine. The chain is Phosphoserine aminotransferase from Shewanella baltica (strain OS223).